The following is a 69-amino-acid chain: Protein transport protein Sec61 subunit gamma-1 (69 aa).

At M1 the chain carries N-acetylmethionine. The Cytoplasmic segment spans residues 1–32 (MDAIDSVVDPLRDFAKDSIRLVKRCHKPDRKE). Residues 33-61 (FTKVAVRTAIGFVVMGFVGFFVKLIFIPI) traverse the membrane as a helical segment. Topologically, residues 62-69 (NNIIVGAT) are extracellular.

This sequence belongs to the SecE/SEC61-gamma family. In terms of assembly, heterotrimeric complex composed of SEC61-alpha, SEC61-beta and SEC61-gamma.

It localises to the endoplasmic reticulum membrane. Necessary for protein translocation in the endoplasmic reticulum. The sequence is that of Protein transport protein Sec61 subunit gamma-1 (SEC61G1) from Arabidopsis thaliana (Mouse-ear cress).